The following is a 389-amino-acid chain: Protein MEI2-like 7 (389 aa).

Positions 170–184 (RRGMSKVYKPRKPQR) are enriched in basic residues. The interval 170-211 (RRGMSKVYKPRKPQRAGRERSPSPSPVFTTRPMSPTPPMQKL) is disordered. Residues 216–320 (TTVMVRNIPN…KIIDIRAARI (105 aa)) form the RRM domain. Residues 351-370 (PRDGSTAGAGAPSPPAVKTV) form a disordered region.

Its function is as follows. Probable RNA-binding protein that may play a role in growth regulation. This Oryza sativa subsp. japonica (Rice) protein is Protein MEI2-like 7 (OML7).